The primary structure comprises 358 residues: Peptide chain release factor 1 (358 aa).

Gln-234 is modified (N5-methylglutamine).

The protein belongs to the prokaryotic/mitochondrial release factor family. Methylated by PrmC. Methylation increases the termination efficiency of RF1.

It is found in the cytoplasm. Its function is as follows. Peptide chain release factor 1 directs the termination of translation in response to the peptide chain termination codons UAG and UAA. The sequence is that of Peptide chain release factor 1 from Leifsonia xyli subsp. xyli (strain CTCB07).